The following is a 742-amino-acid chain: Envelope glycoprotein H (742 aa).

The N-terminal stretch at 1–29 (MRPGLPSYLIVLAVCLLSHLLSSRYGAEA) is a signal peptide. Topologically, residues 30–719 (ISEPLDKAFH…VVDATDSRLL (690 aa)) are virion surface. Residues Asn-55, Asn-62, Asn-67, and Asn-192 are each glycosylated (N-linked (GlcNAc...) asparagine; by host). The interaction with gL stretch occupies residues 217 to 280 (YLIDELRYVK…QTEKHELLVL (64 aa)). N-linked (GlcNAc...) asparagine; by host glycosylation is found at Asn-641 and Asn-700. The chain crosses the membrane as a helical span at residues 720-740 (MMSVYALSAIIGIYLLYRMLK). At 741–742 (TC) the chain is on the intravirion side.

Belongs to the herpesviridae glycoprotein H family. In terms of assembly, interacts with glycoprotein L (gL); this interaction is necessary for the correct processing and cell surface expression of gH. The heterodimer gH/gL seems to interact with gB trimers during fusion. Forms the envelope pentamer complex (PC) composed of gH, gL, UL128, UL130, and UL131A. The pentamer interacts with host NRP2. Forms the envelope trimer complex composed of gH, gL, and gO. The trimer interacts with host PDGFRA. The trimer also interacts with host EPHA2. Post-translationally, N-glycosylated, O-glycosylated, and sialylated.

Its subcellular location is the virion membrane. It is found in the host cell membrane. The protein localises to the host endosome membrane. Its function is as follows. The heterodimer glycoprotein H-glycoprotein L is required for the fusion of viral and plasma membranes leading to virus entry into the host cell. Following initial binding to host receptor, membrane fusion is mediated by the fusion machinery composed of gB and the heterodimer gH/gL. May also be involved in the fusion between the virion envelope and the outer nuclear membrane during virion morphogenesis. In human cytomegalovirus, forms two distincts complexes to mediate viral entry, a trimer and a pentamer at the surface of the virion envelope. The gH-gL-gO trimer is required for infection in fibroblasts by interacting with host PDGFRA, and in glioblastoma cells by interacting with host EPHA2. The gH-gL-UL128-UL130-UL131A pentamer is essential for viral entry in epithelial, endothelial and myeloid cells via interaction with host NRP2. The protein is Envelope glycoprotein H of Human cytomegalovirus (strain Towne) (HHV-5).